Reading from the N-terminus, the 168-residue chain is Small ribosomal subunit protein uS9 (168 aa).

Positions 1 to 38 are disordered; it reads MAKIADSIDSAQADSVENVESYSTETPESAAPAAPRPV. Residues 9 to 22 show a composition bias toward polar residues; sequence DSAQADSVENVESY. Over residues 23–37 the composition is skewed to low complexity; that stretch reads STETPESAAPAAPRP.

It belongs to the universal ribosomal protein uS9 family.

This Leifsonia xyli subsp. xyli (strain CTCB07) protein is Small ribosomal subunit protein uS9.